The following is a 565-amino-acid chain: E3 ubiquitin-protein ligase RNF168 (565 aa).

The RING-type zinc finger occupies C16–R55. Position 70 is a phosphoserine (S70). The short motif at L110 to E128 is the LR motif 1 element. S134 is subject to Phosphoserine. The UMI motif signature appears at E143–A151. Disordered regions lie at residues L150 to G223 and S252 to C302. Residues E157 to A179 show a composition bias toward basic and acidic residues. The MIU motif 1 signature appears at M168–E191. Residues S181 to S201 show a composition bias toward polar residues. Residue S197 is modified to Phosphoserine. K210 participates in a covalent cross-link: Glycyl lysine isopeptide (Lys-Gly) (interchain with G-Cter in SUMO2). Polar residues predominate over residues P275–S293. Residues S413 and S414 each carry the phosphoserine modification. The short motif at R438–M461 is the MIU motif 2 element. The tract at residues K458 to K521 is disordered. The short motif at R465–R476 is the LR motif 2 element. The span at Q466 to T477 shows a compositional bias: polar residues. S469 carries the post-translational modification Phosphoserine. The span at D504–E518 shows a compositional bias: basic and acidic residues. K525 is covalently cross-linked (Glycyl lysine isopeptide (Lys-Gly) (interchain with G-Cter in SUMO2)).

This sequence belongs to the RNF168 family. As to quaternary structure, monomer. Interacts with UBE2N/UBC13. Sumoylated with SUMO1 by PIAS4 in response to double-strand breaks (DSBs). Post-translationally, ubiquitinated.

Its subcellular location is the nucleus. The catalysed reaction is S-ubiquitinyl-[E2 ubiquitin-conjugating enzyme]-L-cysteine + [acceptor protein]-L-lysine = [E2 ubiquitin-conjugating enzyme]-L-cysteine + N(6)-ubiquitinyl-[acceptor protein]-L-lysine.. It functions in the pathway protein modification; protein ubiquitination. In terms of biological role, E3 ubiquitin-protein ligase required for accumulation of repair proteins to sites of DNA damage. Acts with UBE2N/UBC13 to amplify the RNF8-dependent histone ubiquitination. Recruited to sites of DNA damage at double-strand breaks (DSBs) by binding to ubiquitinated histone H2A and H2AX and amplifies the RNF8-dependent H2A ubiquitination, promoting the formation of 'Lys-63'-linked ubiquitin conjugates. This leads to concentrate ubiquitinated histones H2A and H2AX at DNA lesions to the threshold required for recruitment of TP53BP1 and BRCA1. Also recruited at DNA interstrand cross-links (ICLs) sites and promotes accumulation of 'Lys-63'-linked ubiquitination of histones H2A and H2AX, leading to recruitment of FAAP20 and Fanconi anemia (FA) complex, followed by interstrand cross-link repair. H2A ubiquitination also mediates the ATM-dependent transcriptional silencing at regions flanking DSBs in cis, a mechanism to avoid collision between transcription and repair intermediates. Also involved in class switch recombination in immune system, via its role in regulation of DSBs repair. Following DNA damage, promotes the ubiquitination and degradation of JMJD2A/KDM4A in collaboration with RNF8, leading to unmask H4K20me2 mark and promote the recruitment of TP53BP1 at DNA damage sites. Not able to initiate 'Lys-63'-linked ubiquitination in vitro; possibly due to partial occlusion of the UBE2N/UBC13-binding region. Catalyzes monoubiquitination of 'Lys-13' and 'Lys-15' of nucleosomal histone H2A (H2AK13Ub and H2AK15Ub, respectively). This Mus musculus (Mouse) protein is E3 ubiquitin-protein ligase RNF168.